Here is a 178-residue protein sequence, read N- to C-terminus: Interleukin-10 (178 aa).

An N-terminal signal peptide occupies residues 1-18 (MHSSALLCCLVLLTGVRA). Cystine bridges form between cysteine 30–cysteine 126 and cysteine 80–cysteine 132. N-linked (GlcNAc...) asparagine glycosylation is present at asparagine 134.

It belongs to the IL-10 family. As to quaternary structure, homodimer. Interacts with IL10RA and IL10RB.

The protein localises to the secreted. In terms of biological role, major immune regulatory cytokine that acts on many cells of the immune system where it has profound anti-inflammatory functions, limiting excessive tissue disruption caused by inflammation. Mechanistically, IL10 binds to its heterotetrameric receptor comprising IL10RA and IL10RB leading to JAK1 and STAT2-mediated phosphorylation of STAT3. In turn, STAT3 translocates to the nucleus where it drives expression of anti-inflammatory mediators. Targets antigen-presenting cells (APCs) such as macrophages and monocytes and inhibits their release of pro-inflammatory cytokines including granulocyte-macrophage colony-stimulating factor /GM-CSF, granulocyte colony-stimulating factor/G-CSF, IL-1 alpha, IL-1 beta, IL-6, IL-8 and TNF-alpha. Also interferes with antigen presentation by reducing the expression of MHC-class II and co-stimulatory molecules, thereby inhibiting their ability to induce T cell activation. In addition, controls the inflammatory response of macrophages by reprogramming essential metabolic pathways including mTOR signaling. The protein is Interleukin-10 (IL10) of Macaca nemestrina (Pig-tailed macaque).